A 513-amino-acid polypeptide reads, in one-letter code: ATP synthase subunit alpha (513 aa).

An ATP-binding site is contributed by 169-176 (GDRQTGKT).

Belongs to the ATPase alpha/beta chains family. In terms of assembly, F-type ATPases have 2 components, CF(1) - the catalytic core - and CF(0) - the membrane proton channel. CF(1) has five subunits: alpha(3), beta(3), gamma(1), delta(1), epsilon(1). CF(0) has three main subunits: a(1), b(2) and c(9-12). The alpha and beta chains form an alternating ring which encloses part of the gamma chain. CF(1) is attached to CF(0) by a central stalk formed by the gamma and epsilon chains, while a peripheral stalk is formed by the delta and b chains.

It is found in the cell inner membrane. It catalyses the reaction ATP + H2O + 4 H(+)(in) = ADP + phosphate + 5 H(+)(out). Functionally, produces ATP from ADP in the presence of a proton gradient across the membrane. The alpha chain is a regulatory subunit. The chain is ATP synthase subunit alpha from Polynucleobacter necessarius subsp. necessarius (strain STIR1).